The primary structure comprises 303 residues: Vesicle-trafficking protein SEC22c (303 aa).

The Cytoplasmic portion of the chain corresponds to 1–183; it reads MSMILFASIV…EPAPNLRMKP (183 aa). Residues 8–119 form the Longin domain; that stretch reads SIVRVRDGLP…YAFLEFDSVI (112 aa). The helical transmembrane segment at 184–204 threads the bilayer; it reads VTALGVLSLVLNIMCAALNLI. Topologically, residues 205 to 223 are lumenal; the sequence is RGVHLAEHSLQVAQEEVGN. The helical transmembrane segment at 224–244 threads the bilayer; sequence ILAFFIPSVACIVQCYLYLFY. The Cytoplasmic segment spans residues 245 to 248; the sequence is SPAR. A helical transmembrane segment spans residues 249 to 269; the sequence is TLKVLLMLASICLGNAYLHGL. Position 270 (Arg-270) is a topological domain, lumenal. The chain crosses the membrane as a helical span at residues 271 to 291; the sequence is NTWQILFHVGVAFLSSYQILT. At 292–303 the chain is on the cytoplasmic side; the sequence is RQLQERQSDYGV.

Belongs to the synaptobrevin family.

Its subcellular location is the endoplasmic reticulum membrane. May be involved in vesicle transport between the ER and the Golgi complex. The polypeptide is Vesicle-trafficking protein SEC22c (Sec22c) (Mus musculus (Mouse)).